The following is an 808-amino-acid chain: Anaphase-promoting complex subunit 4 (808 aa).

Tyrosine 469 is modified (phosphotyrosine). Residues serine 757 and serine 758 each carry the phosphoserine modification. Residue lysine 772 forms a Glycyl lysine isopeptide (Lys-Gly) (interchain with G-Cter in SUMO2) linkage. Serine 777 and serine 779 each carry phosphoserine. Lysine 798 participates in a covalent cross-link: Glycyl lysine isopeptide (Lys-Gly) (interchain with G-Cter in SUMO2).

This sequence belongs to the APC4 family. In terms of assembly, the mammalian APC/C is composed at least of 14 distinct subunits ANAPC1, ANAPC2, CDC27/APC3, ANAPC4, ANAPC5, CDC16/APC6, ANAPC7, CDC23/APC8, ANAPC10, ANAPC11, CDC26/APC12, ANAPC13, ANAPC15 and ANAPC16 that assemble into a complex of at least 19 chains with a combined molecular mass of around 1.2 MDa; APC/C interacts with FZR1 and FBXO5. In the context of the APC/C complex, directly interacts with UBE2S. Interacts with FBXO43.

The protein localises to the nucleus. It functions in the pathway protein modification; protein ubiquitination. Component of the anaphase promoting complex/cyclosome (APC/C), a cell cycle-regulated E3 ubiquitin ligase that controls progression through mitosis and the G1 phase of the cell cycle. The APC/C complex acts by mediating ubiquitination and subsequent degradation of target proteins: it mainly mediates the formation of 'Lys-11'-linked polyubiquitin chains and, to a lower extent, the formation of 'Lys-48'- and 'Lys-63'-linked polyubiquitin chains. The APC/C complex catalyzes assembly of branched 'Lys-11'-/'Lys-48'-linked branched ubiquitin chains on target proteins. The polypeptide is Anaphase-promoting complex subunit 4 (ANAPC4) (Homo sapiens (Human)).